The primary structure comprises 135 residues: Large-conductance mechanosensitive channel (135 aa).

The next 2 helical transmembrane spans lie at 10-30 (FAMR…GAFG) and 76-96 (GSFI…FCVI).

This sequence belongs to the MscL family. In terms of assembly, homopentamer.

It is found in the cell inner membrane. Channel that opens in response to stretch forces in the membrane lipid bilayer. May participate in the regulation of osmotic pressure changes within the cell. The sequence is that of Large-conductance mechanosensitive channel from Campylobacter concisus (strain 13826).